The following is a 257-amino-acid chain: Ribosomal RNA small subunit methyltransferase J (257 aa).

S-adenosyl-L-methionine-binding positions include 107–108 (RD), 123–124 (ER), and aspartate 177.

It belongs to the methyltransferase superfamily. RsmJ family.

It localises to the cytoplasm. The catalysed reaction is guanosine(1516) in 16S rRNA + S-adenosyl-L-methionine = N(2)-methylguanosine(1516) in 16S rRNA + S-adenosyl-L-homocysteine + H(+). Functionally, specifically methylates the guanosine in position 1516 of 16S rRNA. The chain is Ribosomal RNA small subunit methyltransferase J from Haemophilus influenzae (strain ATCC 51907 / DSM 11121 / KW20 / Rd).